Reading from the N-terminus, the 103-residue chain is Small ribosomal subunit protein uS10 (103 aa).

It belongs to the universal ribosomal protein uS10 family. As to quaternary structure, part of the 30S ribosomal subunit.

Functionally, involved in the binding of tRNA to the ribosomes. The polypeptide is Small ribosomal subunit protein uS10 (Buchnera aphidicola subsp. Cinara cedri (strain Cc)).